The sequence spans 166 residues: Interferon gamma (166 aa).

An N-terminal signal peptide occupies residues 1–23 (MKYTSYILALQLCVLLGFSGSYG). Gln24 carries the post-translational modification Pyrrolidone carboxylic acid. Residues Asn39 and Asn106 are each glycosylated (N-linked (GlcNAc...) asparagine).

Belongs to the type II (or gamma) interferon family. Homodimer. Interacts with IFNGR1 (via extracellular domain); this interaction promotes IFNGR1 dimerization. Released primarily from activated T lymphocytes.

It localises to the secreted. In terms of biological role, type II interferon produced by immune cells such as T-cells and NK cells that plays crucial roles in antimicrobial, antiviral, and antitumor responses by activating effector immune cells and enhancing antigen presentation. Primarily signals through the JAK-STAT pathway after interaction with its receptor IFNGR1 to affect gene regulation. Upon IFNG binding, IFNGR1 intracellular domain opens out to allow association of downstream signaling components JAK2, JAK1 and STAT1, leading to STAT1 activation, nuclear translocation and transcription of IFNG-regulated genes. Many of the induced genes are transcription factors such as IRF1 that are able to further drive regulation of a next wave of transcription. Plays a role in class I antigen presentation pathway by inducing a replacement of catalytic proteasome subunits with immunoproteasome subunits. In turn, increases the quantity, quality, and repertoire of peptides for class I MHC loading. Increases the efficiency of peptide generation also by inducing the expression of activator PA28 that associates with the proteasome and alters its proteolytic cleavage preference. Up-regulates as well MHC II complexes on the cell surface by promoting expression of several key molecules such as cathepsins B/CTSB, H/CTSH, and L/CTSL. Participates in the regulation of hematopoietic stem cells during development and under homeostatic conditions by affecting their development, quiescence, and differentiation. The protein is Interferon gamma (IFNG) of Cervus elaphus (Red deer).